A 306-amino-acid polypeptide reads, in one-letter code: Acetyl-coenzyme A carboxylase carboxyl transferase subunit beta (306 aa).

A CoA carboxyltransferase N-terminal domain is found at 25–294 (VWTKCDSCGQ…PSPDAPREAV (270 aa)). 4 residues coordinate Zn(2+): Cys29, Cys32, Cys48, and Cys51. The segment at 29–51 (CDSCGQVLYRAELERNLEVCPKC) adopts a C4-type zinc-finger fold. The disordered stretch occupies residues 286–306 (SPDAPREAVVVPPVPDQDHEA).

The protein belongs to the AccD/PCCB family. In terms of assembly, acetyl-CoA carboxylase is a heterohexamer composed of biotin carboxyl carrier protein (AccB), biotin carboxylase (AccC) and two subunits each of ACCase subunit alpha (AccA) and ACCase subunit beta (AccD). It depends on Zn(2+) as a cofactor.

It is found in the cytoplasm. It catalyses the reaction N(6)-carboxybiotinyl-L-lysyl-[protein] + acetyl-CoA = N(6)-biotinyl-L-lysyl-[protein] + malonyl-CoA. It functions in the pathway lipid metabolism; malonyl-CoA biosynthesis; malonyl-CoA from acetyl-CoA: step 1/1. Functionally, component of the acetyl coenzyme A carboxylase (ACC) complex. Biotin carboxylase (BC) catalyzes the carboxylation of biotin on its carrier protein (BCCP) and then the CO(2) group is transferred by the transcarboxylase to acetyl-CoA to form malonyl-CoA. This Cronobacter sakazakii (strain ATCC BAA-894) (Enterobacter sakazakii) protein is Acetyl-coenzyme A carboxylase carboxyl transferase subunit beta.